Reading from the N-terminus, the 591-residue chain is NADP-dependent malic enzyme (591 aa).

Tyr-139 (proton donor) is an active-site residue. Residue Arg-192 participates in NAD(+) binding. Lys-210 (proton acceptor) is an active-site residue. A divalent metal cation is bound by residues Glu-282, Asp-283, and Asp-306. Asp-306 is an NAD(+) binding site. 335–351 (LFLGAGEAGTGIAELIA) is a binding site for NADP(+). NAD(+) is bound at residue Asn-447.

This sequence belongs to the malic enzymes family. In terms of assembly, homotetramer. The cofactor is Mg(2+). Requires Mn(2+) as cofactor.

The protein localises to the cytoplasm. The enzyme catalyses (S)-malate + NADP(+) = pyruvate + CO2 + NADPH. It carries out the reaction oxaloacetate + H(+) = pyruvate + CO2. In Vitis vinifera (Grape), this protein is NADP-dependent malic enzyme.